The chain runs to 484 residues: Protein nucleotidyltransferase YdiU (484 aa).

Positions 87, 89, 90, 110, 122, 123, 173, and 180 each coordinate ATP. Aspartate 249 serves as the catalytic Proton acceptor. Residues asparagine 250 and aspartate 259 each contribute to the Mg(2+) site. Aspartate 259 lines the ATP pocket.

Belongs to the SELO family. Mg(2+) serves as cofactor. Mn(2+) is required as a cofactor.

It carries out the reaction L-seryl-[protein] + ATP = 3-O-(5'-adenylyl)-L-seryl-[protein] + diphosphate. The catalysed reaction is L-threonyl-[protein] + ATP = 3-O-(5'-adenylyl)-L-threonyl-[protein] + diphosphate. It catalyses the reaction L-tyrosyl-[protein] + ATP = O-(5'-adenylyl)-L-tyrosyl-[protein] + diphosphate. The enzyme catalyses L-histidyl-[protein] + UTP = N(tele)-(5'-uridylyl)-L-histidyl-[protein] + diphosphate. It carries out the reaction L-seryl-[protein] + UTP = O-(5'-uridylyl)-L-seryl-[protein] + diphosphate. The catalysed reaction is L-tyrosyl-[protein] + UTP = O-(5'-uridylyl)-L-tyrosyl-[protein] + diphosphate. Nucleotidyltransferase involved in the post-translational modification of proteins. It can catalyze the addition of adenosine monophosphate (AMP) or uridine monophosphate (UMP) to a protein, resulting in modifications known as AMPylation and UMPylation. This chain is Protein nucleotidyltransferase YdiU, found in Alcanivorax borkumensis (strain ATCC 700651 / DSM 11573 / NCIMB 13689 / SK2).